The following is a 183-amino-acid chain: UPF0725 protein At4g11700 (183 aa).

This sequence belongs to the UPF0725 (EMB2204) family.

The protein is UPF0725 protein At4g11700 of Arabidopsis thaliana (Mouse-ear cress).